A 436-amino-acid polypeptide reads, in one-letter code: Putative actin-fragmin kinase DDB_G0268748 (436 aa).

Residues 14–58 (DKNIDSGSSSSNIGGSSSNSSGTTNKRSSGNFNGSSASSSPSSST) form a disordered region. Positions 18-57 (DSGSSSSNIGGSSSNSSGTTNKRSSGNFNGSSASSSPSSS) are enriched in low complexity.

The protein belongs to the protein kinase superfamily. AFK Ser/Thr protein kinase family.

In Dictyostelium discoideum (Social amoeba), this protein is Putative actin-fragmin kinase DDB_G0268748.